Reading from the N-terminus, the 378-residue chain is Stimulator of interferon genes protein (378 aa).

The Cytoplasmic segment spans residues 1–17 (MPYSNLHPAIPRPRGHR). Residues 1 to 189 (MPYSNLHPAI…MFNQLHNNML (189 aa)) form a mediates interaction with ZDHHC1 and ZDHHC11 region. Residues 18 to 34 (SKYVALIFLVASLMILW) form a helical membrane-spanning segment. Residue lysine 19 forms a Glycyl lysine isopeptide (Lys-Gly) (interchain with G-Cter in ubiquitin) linkage. At 35 to 44 (VAKDPPNHTL) the chain is on the lumenal side. The helical transmembrane segment at 45 to 69 (KYLALHLASHELGLLLKNLCCLAEE) threads the bilayer. Residues 70–91 (LCHVQSRYQGSYWKAVRACLGC) lie on the Cytoplasmic side of the membrane. S-palmitoyl cysteine attachment occurs at residues cysteine 88 and cysteine 91. The chain crosses the membrane as a helical span at residues 92–106 (PIHCMAMILLSSYFY). The Lumenal segment spans residues 107–115 (FLQNTADIY). A helical membrane pass occupies residues 116–133 (LSWMFGLLVLYKSLSMLL). Over 134–378 (GLQSLTPAEV…QPLPLRTDLI (245 aa)) the chain is Cytoplasmic. A Glycyl lysine isopeptide (Lys-Gly) (interchain with G-Cter in ubiquitin) cross-link involves residue lysine 150. The cyclic dinucleotide-binding domain (CBD) stretch occupies residues 152-339 (LNVAHGLAWS…RHIRQEEKEE (188 aa)). Glycine 165 contacts 3',3'-c-di-GMP. Tyrosine 166 is a 2',3'-cUAMP binding site. Tyrosine 166 contacts 3',3'-cGAMP. Lysine 235 participates in a covalent cross-link: Glycyl lysine isopeptide (Lys-Gly) (interchain with G-Cter in ubiquitin). Residue arginine 237 coordinates 2',3'-cUAMP. Arginine 237 serves as a coordination point for 3',3'-cGAMP. Arginine 237 contacts 2',3'-cGAMP. 3',3'-c-di-GMP is bound by residues 237–240 (RVYS) and threonine 262. Serine 240 is modified (phosphoserine). 2',3'-cUAMP is bound at residue threonine 262. Threonine 262 provides a ligand contact to 2',3'-cGAMP. Residue lysine 337 forms a Glycyl lysine isopeptide (Lys-Gly) (interchain with G-Cter in SUMO) linkage. Residues 339–378 (EVTMNAPMTSVAPPPSVLSQEPRLLISGMDQPLPLRTDLI) form a C-terminal tail (CTT) region. Serine 354 is subject to Phosphoserine; by MAP3K7. Phosphoserine; by TBK1 occurs at positions 357 and 365. The pLxIS motif signature appears at 362–365 (LLIS).

It belongs to the STING family. Homodimer; forms a homodimer in absence of cyclic nucleotide (c-di-GMP or cGAMP); 'Lys-63'-linked ubiquitination at Lys-150 is required for homodimerization. Homotetramer; in presence of cyclic nucleotide (c-di-GMP or cGAMP), forms tetramers and higher-order oligomers through side-by-side packing. Interacts (when phosphorylated) with IRF3; following activation and phosphorylation on the pLxIS motif by TBK1, recruits IRF3. Interacts with RIGI, MAVS and SSR2. Interacts with RNF5 and TRIM56. Interacts with TBK1; when homodimer, leading to subsequent production of IFN-beta. Interacts with IFIT1 and IFIT2. Interacts with TRIM29; this interaction induces STING1 ubiquitination and subsequent degradation. Associates with the MHC-II complex. Interacts with STEEP1; interaction takes place upon cGAMP-activation and STING1 phosphorylation by MAP3K7/TAK1 and promotes STING1 translocation to COPII vesicles. Interacts with SEC24A, SEC24B and SEC24C; promoting translocation to COPII vesicles. Interacts (when ubiquitinated) with SQSTM1; leading to relocalization to autophagosomes. Interacts with SURF4. Interacts with HNRNPA2B1. Interacts with ZDHHC1; ZDHHC1 constitutively interacts with STING1 and in presence of DNA viruses activates it by promoting its cGAMP-induced oligomerization and the recruitment of downstream signaling components. Interacts with ZDHHC11; in presence of DNA viruses promotes the recruitment of IRF3 to STING1. Interacts with TOMM70. Interacts with IFI204. Interacts with TAB1; promoting recruitment of TAB1 to the endoplasmic reticulum membrane and subsequent activation of MAP3K7/TAK1. Interacts (via transmembrane domain) with TMEM203. Interacts with DDX41. Phosphorylation by TBK1 leads to activation and production of IFN-beta. Following cyclic nucleotide (c-di-GMP or cGAMP)-binding, activation and translocation from the endoplasmic reticulum, STING1 is phosphorylated by TBK1 at Ser-365 in the pLxIS motif. The phosphorylated pLxIS motif constitutes an IRF3-binding motif, leading to recruitment of the transcription factor IRF3 to induce type-I interferons and other cytokines. The phosphorylated pLxIS motif facilitates SENP2 recruitment during late phase of viral infection. Phosphorylated on tyrosine residues upon MHC-II aggregation. Dephosphorylation by PPP6C leads to inactivation and decreased production of IFN-beta. Phosphorylation at Ser-357 is also required to activate IRF3. Phosphorylation at Ser-354 by MAP3K7/TAK1 facilitates its interaction with STEEP1, promoting STING1 translocation to COPII vesicles. In terms of processing, ubiquitinated. Ubiquitinated via 'Lys-63'-linked ubiquitin chains in response to double-stranded DNA treatment, leading to relocalization to autophagosomes and subsequent degradation; this process is dependent on SQSTM1. 'Lys-63'-linked ubiquitination mediated by TRIM56 at Lys-150 promotes homodimerization and recruitment of the antiviral kinase TBK1 and subsequent production of IFN-beta. 'Lys-48'-linked polyubiquitination at Lys-150 occurring after viral infection is mediated by RNF5 and leads to proteasomal degradation. 'Lys-11'-linked polyubiquitination at Lys-150 by RNF26 leads to stabilize STING1: it protects STING1 from RNF5-mediated 'Lys-48'-linked polyubiquitination. 'Lys-33'-linked and 'Lys-48'-linked deubiquitinated by USP20; leading to its stabilization and promotion of innate antiviral response. 'Lys-48'-linked deubiquitinated by USP44; leading to its stabilization and promotion of innate antiviral response. Deubiquitinated by USP13; leading to inhibition of innate antiviral response. 'Lys-63'-linked deubiquitinated by USP49; leading to inhibition of the subsequent recruitment of TBK1 to the signaling complex. 'Lys-63'-linked ubiquitination mediated by RNF39 promotes the activation of the cGAS-STING pathway. MARCHF5-mediated ubiquitination prevents the oxidation-induced polymer formation. Post-translationally, sumoylated at Lys-337 by TRIM38 during the early phase of viral infection, promoting its stability by preventing its relocalization to autophagosomes and subsequent degradation. Desumoylated by SENP2 during the late phase of viral infection. Palmitoylation takes place in the Golgi apparatus and creates a platform for the recruitment of TBK1. In terms of tissue distribution, present in spleen and thymus tissue. Also present in dendritic cells (at protein level).

The protein resides in the endoplasmic reticulum membrane. The protein localises to the cytoplasm. It localises to the perinuclear region. It is found in the endoplasmic reticulum-Golgi intermediate compartment membrane. Its subcellular location is the golgi apparatus membrane. The protein resides in the cytoplasmic vesicle. The protein localises to the autophagosome membrane. It localises to the mitochondrion outer membrane. It is found in the cell membrane. Its subcellular location is the lysosome membrane. The enzyme catalyses H(+)(in) = H(+)(out). With respect to regulation, activated by anticancer drug 5,6-dimethylxanthenone 4-acetic acid (DMXAA). Specifically inhibited by nitrofuran derivatives C-178 and C-176, which covalently bind Cys-91 and prevent palmitoylation and subsequent activation od STING1. Functionally, facilitator of innate immune signaling that acts as a sensor of cytosolic DNA from bacteria and viruses and promotes the production of type I interferon (IFN-alpha and IFN-beta). Innate immune response is triggered in response to non-CpG double-stranded DNA from viruses and bacteria delivered to the cytoplasm. Acts by binding cyclic dinucleotides: recognizes and binds cyclic di-GMP (c-di-GMP), a second messenger produced by bacteria, cyclic UMP-AMP (2',3'-cUAMP), and cyclic GMP-AMP (cGAMP), a messenger produced by CGAS in response to DNA virus in the cytosol. Upon binding to c-di-GMP, cUAMP or cGAMP, STING1 oligomerizes, translocates from the endoplasmic reticulum and is phosphorylated by TBK1 on the pLxIS motif, leading to recruitment and subsequent activation of the transcription factor IRF3 to induce expression of type I interferon and exert a potent anti-viral state. Exhibits 2',3' phosphodiester linkage-specific ligand recognition: can bind both 2'-3' linked cGAMP (2'-3'-cGAMP) and 3'-3' linked cGAMP but is preferentially activated by 2'-3' linked cGAMP. The preference for 2'-3'-cGAMP, compared to other linkage isomers is probably due to the ligand itself, whichs adopts an organized free-ligand conformation that resembles the STING1-bound conformation and pays low energy costs in changing into the active conformation. In addition to promote the production of type I interferons, plays a direct role in autophagy. Following cGAMP-binding, STING1 buds from the endoplasmic reticulum into COPII vesicles, which then form the endoplasmic reticulum-Golgi intermediate compartment (ERGIC). The ERGIC serves as the membrane source for WIPI2 recruitment and LC3 lipidation, leading to formation of autophagosomes that target cytosolic DNA or DNA viruses for degradation by the lysosome. Promotes autophagy by acting as a proton channel that directs proton efflux from the Golgi to facilitate MAP1LC3B/LC3B lipidation. The autophagy- and interferon-inducing activities can be uncoupled and autophagy induction is independent of TBK1 phosphorylation. Autophagy is also triggered upon infection by bacteria: following c-di-GMP-binding, which is produced by live Gram-positive bacteria, promotes reticulophagy. May be involved in translocon function, the translocon possibly being able to influence the induction of type I interferons. May be involved in transduction of apoptotic signals via its association with the major histocompatibility complex class II (MHC-II). The chain is Stimulator of interferon genes protein from Mus musculus (Mouse).